We begin with the raw amino-acid sequence, 81 residues long: Putative membrane protein insertion efficiency factor (81 aa).

The tract at residues 60-81 is disordered; it reads WNPGGYDPVPTHNTSNSSPMAE. The span at 70-81 shows a compositional bias: polar residues; sequence THNTSNSSPMAE.

The protein belongs to the UPF0161 family.

It localises to the cell inner membrane. Its function is as follows. Could be involved in insertion of integral membrane proteins into the membrane. The polypeptide is Putative membrane protein insertion efficiency factor (Stutzerimonas stutzeri (strain A1501) (Pseudomonas stutzeri)).